An 85-amino-acid chain; its full sequence is Large ribosomal subunit protein bL27 (85 aa).

Positions Met1–Gly22 are disordered. Polar residues predominate over residues Ala7 to Gln19.

The protein belongs to the bacterial ribosomal protein bL27 family.

In Leifsonia xyli subsp. xyli (strain CTCB07), this protein is Large ribosomal subunit protein bL27.